A 492-amino-acid polypeptide reads, in one-letter code: Malonate-semialdehyde dehydrogenase (492 aa).

NAD(+) contacts are provided by Phe-156, Lys-180, Glu-183, Lys-184, Ser-233, and Thr-255. Residue Cys-288 is the Nucleophile of the active site. Glu-387 contacts NAD(+).

Belongs to the aldehyde dehydrogenase family. IolA subfamily. Homotetramer.

The enzyme catalyses 3-oxopropanoate + NAD(+) + CoA + H2O = hydrogencarbonate + acetyl-CoA + NADH + H(+). It catalyses the reaction 2-methyl-3-oxopropanoate + NAD(+) + CoA + H2O = propanoyl-CoA + hydrogencarbonate + NADH + H(+). It functions in the pathway polyol metabolism; myo-inositol degradation into acetyl-CoA; acetyl-CoA from myo-inositol: step 7/7. Catalyzes the oxidation of malonate semialdehyde (MSA) and methylmalonate semialdehyde (MMSA) into acetyl-CoA and propanoyl-CoA, respectively. Is involved in a myo-inositol catabolic pathway. Bicarbonate, and not CO2, is the end-product of the enzymatic reaction. In Lacticaseibacillus casei (Lactobacillus casei), this protein is Malonate-semialdehyde dehydrogenase.